The primary structure comprises 421 residues: Stemmadenine O-acetyltransferase (421 aa).

The disordered stretch occupies residues Met1–Gln21. Residues His160 and Asp362 each act as proton acceptor in the active site.

This sequence belongs to the plant acyltransferase family. Monomer. As to expression, expressed in leaf epidermis.

It carries out the reaction 15alpha-stemmadenine + acetyl-CoA = O-acetyl-15alpha-stemmadenine + CoA. Its pathway is alkaloid biosynthesis. Component of iboga and aspidosperma monoterpenoid indole alkaloids (MIAs, e.g. tabersonine and catharanthine) biosynthesis pathway from 19E-geissoschizine. Acetyltransferase that catalyzes the formation of O-acetylstemmadenine from stemmadenine. In Catharanthus roseus (Madagascar periwinkle), this protein is Stemmadenine O-acetyltransferase.